The sequence spans 208 residues: MSLQRTGEVHRVTKETNVTVRLGLDGKGKCKISTGVAFLDHMLQQLSSHGLFDLEVIAKGDTHIDDHHTNEDVGIAIGQALSESLGERQGINRFGHFSAPLDEALVQVVLDCSGRPHLSYGLNIPSQRIGSYETELVKEFFIAVVNNSGLTLHIRQLDGTNSHHIVEACFKAFARALRLATELDPRRGDAIPSSKGVLEQAGSKPKQI.

The protein belongs to the imidazoleglycerol-phosphate dehydratase family.

It localises to the cytoplasm. It carries out the reaction D-erythro-1-(imidazol-4-yl)glycerol 3-phosphate = 3-(imidazol-4-yl)-2-oxopropyl phosphate + H2O. It functions in the pathway amino-acid biosynthesis; L-histidine biosynthesis; L-histidine from 5-phospho-alpha-D-ribose 1-diphosphate: step 6/9. In Prochlorococcus marinus (strain MIT 9211), this protein is Imidazoleglycerol-phosphate dehydratase.